The chain runs to 458 residues: Methylenetetrahydrofolate--tRNA-(uracil-5-)-methyltransferase TrmFO (458 aa).

11–16 (GGGMAG) provides a ligand contact to FAD.

The protein belongs to the MnmG family. TrmFO subfamily. Requires FAD as cofactor.

The protein resides in the cytoplasm. It carries out the reaction uridine(54) in tRNA + (6R)-5,10-methylene-5,6,7,8-tetrahydrofolate + NADH + H(+) = 5-methyluridine(54) in tRNA + (6S)-5,6,7,8-tetrahydrofolate + NAD(+). The enzyme catalyses uridine(54) in tRNA + (6R)-5,10-methylene-5,6,7,8-tetrahydrofolate + NADPH + H(+) = 5-methyluridine(54) in tRNA + (6S)-5,6,7,8-tetrahydrofolate + NADP(+). Functionally, catalyzes the folate-dependent formation of 5-methyl-uridine at position 54 (M-5-U54) in all tRNAs. The polypeptide is Methylenetetrahydrofolate--tRNA-(uracil-5-)-methyltransferase TrmFO (Jannaschia sp. (strain CCS1)).